The chain runs to 107 residues: U1-lycotoxin-Ls1e (107 aa).

The N-terminal stretch at 1 to 20 (MMKVLVVFALLVTLISYSSS) is a signal peptide. Positions 21–41 (EGIDDLEADELLSLMANEQTR) are excised as a propeptide. Intrachain disulfides connect cysteine 44–cysteine 59, cysteine 51–cysteine 68, cysteine 58–cysteine 86, and cysteine 70–cysteine 84.

It belongs to the neurotoxin 19 (CSTX) family. 04 (U1-Lctx) subfamily. Expressed by the venom gland.

The protein localises to the secreted. In Lycosa singoriensis (Wolf spider), this protein is U1-lycotoxin-Ls1e.